A 503-amino-acid chain; its full sequence is Probable cytosol aminopeptidase (503 aa).

K270 and D275 together coordinate Mn(2+). The active site involves K282. 3 residues coordinate Mn(2+): D293, D352, and E354. R356 is a catalytic residue.

Belongs to the peptidase M17 family. The cofactor is Mn(2+).

The protein resides in the cytoplasm. The catalysed reaction is Release of an N-terminal amino acid, Xaa-|-Yaa-, in which Xaa is preferably Leu, but may be other amino acids including Pro although not Arg or Lys, and Yaa may be Pro. Amino acid amides and methyl esters are also readily hydrolyzed, but rates on arylamides are exceedingly low.. The enzyme catalyses Release of an N-terminal amino acid, preferentially leucine, but not glutamic or aspartic acids.. Presumably involved in the processing and regular turnover of intracellular proteins. Catalyzes the removal of unsubstituted N-terminal amino acids from various peptides. The sequence is that of Probable cytosol aminopeptidase from Salmonella arizonae (strain ATCC BAA-731 / CDC346-86 / RSK2980).